The sequence spans 469 residues: Protein HEAT STRESS TOLERANT DWD 1 (469 aa).

Over residues 1–15 (MGRNVKTKAKRKNKK) the composition is skewed to basic residues. 2 disordered regions span residues 1-29 (MGRN…SIPT) and 115-150 (DVVP…KTPN). A compositionally biased stretch (acidic residues) spans 124 to 143 (GEDEDEDDEDDSDSDDDDGD). 6 WD repeats span residues 157 to 197 (AHHG…NALA), 221 to 261 (GHKD…WAVD), 267 to 307 (GHTA…SPAL), 311 to 351 (AHNA…GGDA), 358 to 398 (YHKH…DEEE), and 425 to 464 (QGQK…NTLP).

Belongs to the WD repeat RBAP46/RBAP48/MSI1 family. In terms of assembly, probable component of CULLIN4 (CUL4) RING ligase (CRL4) complexes. Interacts with DDB1A and DDB1B. Associates with HSP90-1.

It participates in protein modification; protein ubiquitination. Probable substrate receptor of CRL4 E3 ligase complexes acting as negative regulators of thermotolerance by disturbing the action of HSP90-1 and by preventing the expression of heat-inducible genes (e.g. HSP14.7, HSP21, At2g03020 and WRKY28). This chain is Protein HEAT STRESS TOLERANT DWD 1, found in Arabidopsis thaliana (Mouse-ear cress).